The chain runs to 166 residues: Putative peroxiredoxin (166 aa).

Positions 1–166 (EIGSTIPNAT…SSAATVLSKL (166 aa)) constitute a Thioredoxin domain. Catalysis depends on Cys-56, which acts as the Cysteine sulfenic acid (-SOH) intermediate. A Microbody targeting signal motif is present at residues 164-166 (SKL).

The protein belongs to the peroxiredoxin family. Prx5 subfamily. Homodimer; disulfide-linked, upon oxidation.

It carries out the reaction a hydroperoxide + [thioredoxin]-dithiol = an alcohol + [thioredoxin]-disulfide + H2O. Its function is as follows. Thiol-specific peroxidase that catalyzes the reduction of hydrogen peroxide and organic hydroperoxides to water and alcohols, respectively. Plays a role in cell protection against oxidative stress by detoxifying peroxides and as sensor of hydrogen peroxide-mediated signaling events. This Malassezia furfur (Pityriasis versicolor infection agent) protein is Putative peroxiredoxin.